The following is a 68-amino-acid chain: Arabinogalactan peptide 1 (68 aa).

The signal sequence occupies residues 1 to 30; sequence MAGQLKSKIVAVAVAAVVVVASSLVGTASA. Residue serine 40 is the site of GPI-anchor amidated serine attachment. Positions 41–68 are cleaved as a propeptide — removed in mature form; sequence GATATAAAAPAFAAVSVAAAALGGYLFC.

The protein belongs to the AG-peptide AGP family. O-glycosylated on hydroxyprolines; noncontiguous hydroxylproline residues are glycosylated with arabinogalactan. As to expression, expressed in roots, stems, flowers and seeds.

Its subcellular location is the vacuole. It localises to the aleurone grain membrane. Proteoglycan that seems to be implicated in diverse developmental roles such as differentiation, cell-cell recognition, embryogenesis and programmed cell death. The protein is Arabinogalactan peptide 1 (AGPEP1) of Oryza sativa subsp. japonica (Rice).